The chain runs to 26 residues: DEAD-box ATP-dependent RNA helicase 1 (26 aa).

Positions 1–10 (RELLMGIFEK) match the Q motif motif. 11 to 16 (NGTGKT) provides a ligand contact to ATP. In terms of domain architecture, Helicase ATP-binding spans 11 to 26 (NGTGKTAAFVIPLLQK).

This sequence belongs to the DEAD box helicase family. DDX6/DHH1 subfamily.

It is found in the cytoplasm. It localises to the P-body. The enzyme catalyses ATP + H2O = ADP + phosphate + H(+). Functionally, ATP-dependent RNA helicase involved in mRNA turnover, and more specifically in mRNA decapping. This Catharanthus roseus (Madagascar periwinkle) protein is DEAD-box ATP-dependent RNA helicase 1.